The following is a 118-amino-acid chain: UPF0342 protein BT9727_0768 (118 aa).

This sequence belongs to the UPF0342 family.

The chain is UPF0342 protein BT9727_0768 from Bacillus thuringiensis subsp. konkukian (strain 97-27).